The chain runs to 242 residues: MIKRVKTGIPGMDEILHGGIPERNIVLISGGPGTGKTIFSQQFIWNGLQMGEPGIYVALEEHPVQVKKNMEVFGWNVDPFEKEGKFAIVDAFTGGIGEYAEKEKYVVRDIDDVRELAEVLKRAVRETQAKRVVIDSVTTLYITKPAMARSIIFQLKRILSGLGCTSLFVSQVSVTEKGFGGPGVEHGVDGIIRLDLDEIDGELKRSLIVWKMRGTSHSMRRHPFEITDKGIVIYPSEGGEGR.

The 240-residue stretch at lysine 3–arginine 242 folds into the KaiC domain. Glycine 30 to threonine 37 lines the ATP pocket.

This sequence belongs to the UPF0273 family.

The chain is UPF0273 protein TM_0370 from Thermotoga maritima (strain ATCC 43589 / DSM 3109 / JCM 10099 / NBRC 100826 / MSB8).